We begin with the raw amino-acid sequence, 337 residues long: Glyceraldehyde-3-phosphate dehydrogenase 1, cytosolic (337 aa).

NAD(+) contacts are provided by residues 13–14 (RI), D35, and R82. D-glyceraldehyde 3-phosphate contacts are provided by residues 153–155 (SCT), T184, 213–214 (TG), and R236. C154 functions as the Nucleophile in the catalytic mechanism. N318 provides a ligand contact to NAD(+).

It belongs to the glyceraldehyde-3-phosphate dehydrogenase family. In terms of assembly, homotetramer. In terms of processing, phosphorylated after gibberellin treatment.

It is found in the cytoplasm. It catalyses the reaction D-glyceraldehyde 3-phosphate + phosphate + NAD(+) = (2R)-3-phospho-glyceroyl phosphate + NADH + H(+). The protein operates within carbohydrate degradation; glycolysis; pyruvate from D-glyceraldehyde 3-phosphate: step 1/5. In terms of biological role, key enzyme in glycolysis that catalyzes the first step of the pathway by converting D-glyceraldehyde 3-phosphate (G3P) into 3-phospho-D-glyceroyl phosphate. Essential for the maintenance of cellular ATP levels and carbohydrate metabolism. This chain is Glyceraldehyde-3-phosphate dehydrogenase 1, cytosolic (GAPC1), found in Oryza sativa subsp. japonica (Rice).